We begin with the raw amino-acid sequence, 36 residues long: Photosystem I reaction center subunit VIII (36 aa).

The chain crosses the membrane as a helical span at residues isoleucine 9–tyrosine 29.

This sequence belongs to the PsaI family.

It is found in the plastid. The protein resides in the chloroplast thylakoid membrane. Its function is as follows. May help in the organization of the PsaL subunit. The polypeptide is Photosystem I reaction center subunit VIII (Tupiella akineta (Green alga)).